The following is a 205-amino-acid chain: Thymidylate kinase (205 aa).

10–17 (GIDGAGKS) is a binding site for ATP.

This sequence belongs to the thymidylate kinase family.

The enzyme catalyses dTMP + ATP = dTDP + ADP. In terms of biological role, phosphorylation of dTMP to form dTDP in both de novo and salvage pathways of dTTP synthesis. This is Thymidylate kinase from Ralstonia nicotianae (strain ATCC BAA-1114 / GMI1000) (Ralstonia solanacearum).